Here is a 217-residue protein sequence, read N- to C-terminus: Methylthioribulose-1-phosphate dehydratase (217 aa).

2 residues coordinate Zn(2+): H106 and H108.

This sequence belongs to the aldolase class II family. MtnB subfamily. It depends on Zn(2+) as a cofactor.

It catalyses the reaction 5-(methylsulfanyl)-D-ribulose 1-phosphate = 5-methylsulfanyl-2,3-dioxopentyl phosphate + H2O. Its pathway is amino-acid biosynthesis; L-methionine biosynthesis via salvage pathway; L-methionine from S-methyl-5-thio-alpha-D-ribose 1-phosphate: step 2/6. Catalyzes the dehydration of methylthioribulose-1-phosphate (MTRu-1-P) into 2,3-diketo-5-methylthiopentyl-1-phosphate (DK-MTP-1-P). The sequence is that of Methylthioribulose-1-phosphate dehydratase from Xanthomonas campestris pv. campestris (strain 8004).